Reading from the N-terminus, the 431-residue chain is 5-methylthioadenosine/S-adenosylhomocysteine deaminase (431 aa).

His-66 and His-68 together coordinate Zn(2+). Substrate-binding residues include Glu-95, Arg-147, and His-185. His-212 contacts Zn(2+). Substrate contacts are provided by Glu-215 and Asp-300. Residue Asp-300 participates in Zn(2+) binding.

The protein belongs to the metallo-dependent hydrolases superfamily. MTA/SAH deaminase family. Requires Zn(2+) as cofactor.

It catalyses the reaction S-adenosyl-L-homocysteine + H2O + H(+) = S-inosyl-L-homocysteine + NH4(+). It carries out the reaction S-methyl-5'-thioadenosine + H2O + H(+) = S-methyl-5'-thioinosine + NH4(+). Its function is as follows. Catalyzes the deamination of 5-methylthioadenosine and S-adenosyl-L-homocysteine into 5-methylthioinosine and S-inosyl-L-homocysteine, respectively. Is also able to deaminate adenosine. The chain is 5-methylthioadenosine/S-adenosylhomocysteine deaminase from Desulfitobacterium hafniense (strain DSM 10664 / DCB-2).